A 289-amino-acid chain; its full sequence is MSANAEAQCGSISEDNTHSSTTCQGYVLPEGKIMPNTVFVGGIDIRMNEAEIRSYFEQYGTVKEVKIITDRTGVSKGYGFVSFLDNVDVQKIVESQISVHGKRLKLGPAIRKQQNLCSYMQPRPLAFNPPAPQFHSVWTNQNTETYVQPQAVVSPLTQYVQTYAYSSPAVLIQQQVPVGYQPAYNYQAPPQWVPGEQRNYVMPPVYTSVNYHYSEDPEFIQTECAVPEPTQMSGNSPQKKSVDRSIQTVVSCLFNPENRLRNTFVSQEDYFRERRAHHFRKGRAVLKSV.

A disordered region spans residues 1-20 (MSANAEAQCGSISEDNTHSS). The RRM domain occupies 36-117 (NTVFVGGIDI…PAIRKQQNLC (82 aa)). The DAZ domain maps to 162 to 187 (TYAYSSPAVLIQQQVPVGYQPAYNYQ).

Belongs to the RRM DAZ family.

The protein localises to the cytoplasm. RNA-binding protein, which probably plays a central role in gametogenesis in both males and females. Acts by binding to the 3'-UTR of mRNA, specifically recognizing GUU triplets, and promoting the translation of key transcripts. The protein is Deleted in azoospermia-like (DAZL) of Gallus gallus (Chicken).